A 115-amino-acid chain; its full sequence is Con-Ins T1B (115 aa).

A signal peptide spans 1 to 24; sequence MTTSFYFLLMALGLLLYVCQSSFG. The propeptide occupies 25 to 29; that stretch reads NQHTR. A 4-hydroxyproline; partial modification is found at proline 34. 3 disulfide bridges follow: cysteine 38–cysteine 101, cysteine 50–cysteine 114, and cysteine 100–cysteine 105. A propeptide spans 52 to 94 (c peptide); sequence RKRNDAGKKRGQASPLWQRGGSLSMLKARAKRNEAFHLQRAHR. The residue at position 98 (glutamate 98) is a 4-carboxyglutamate. A 4-hydroxyproline; partial modification is found at proline 104. Position 109 is a 4-carboxyglutamate; partial (glutamate 109). The residue at position 114 (cysteine 114) is a Cysteine amide.

This sequence belongs to the insulin family. Heterodimer of A and B chains; disulfide-linked. As to expression, expressed by the venom gland.

The protein resides in the secreted. Functionally, this venom insulin, from a fish-hunting cone snail, facilitates prey capture by rapidly inducing hypoglycemic shock. It is one of the smallest known insulin found in nature and lacks the C-terminal segment of the B chain that, in human insulin, mediates engagement of the insulin receptor (INSR) and assembly of the hormone's hexameric storage form. Despite lacking this segment, it both binds and activates human insulin receptor (long isoform (HIR-B) of INSR) with a high potency (EC(50)=12.0 nM). In vivo, intraperitoneal injection of this peptide into zebrafish lowers blood glucose with a lower potency than human insulin. In addition, when applied to water, this peptide reduces overall locomotor activity of zebrafish larvae, observed as a significant decrease in the percentage of time spent swimming and movement frequency. When tested on a mouse model of diabetes, this insulin also lowers blood glucose with a 10-fold lower potency than human insulin. The chain is Con-Ins T1B from Conus tulipa (Fish-hunting cone snail).